The sequence spans 518 residues: Arginyl-tRNA--protein transferase 1 (518 aa).

Position 169 is a phosphoserine (serine 169). The disordered stretch occupies residues 175-203; the sequence is EKLGSGEPSHSVKVHTVPKPGKGADLSKP.

This sequence belongs to the R-transferase family. As to quaternary structure, monomer. Interacts with LIAT1; LIAT1 is not a substrate of ATE1, the interaction takes place in the cytoplasm and seems to increase ATE1 arginyltransferase activity.

It localises to the nucleus. Its subcellular location is the cytoplasm. It catalyses the reaction an N-terminal L-alpha-aminoacyl-[protein] + L-arginyl-tRNA(Arg) = an N-terminal L-arginyl-L-aminoacyl-[protein] + tRNA(Arg) + H(+). In terms of biological role, involved in the post-translational conjugation of arginine to the N-terminal aspartate or glutamate of a protein. This arginylation is required for degradation of the protein via the ubiquitin pathway. Does not arginylate cysteine residues. This Homo sapiens (Human) protein is Arginyl-tRNA--protein transferase 1.